The following is a 522-amino-acid chain: Protein nucleotidyltransferase YdiU (522 aa).

Gly109, Gly111, Arg112, Lys132, Asp144, Gly145, Arg195, and Arg202 together coordinate ATP. The active-site Proton acceptor is Asp271. Residues Asn272 and Asp281 each coordinate Mg(2+). Asp281 serves as a coordination point for ATP.

This sequence belongs to the SELO family. The cofactor is Mg(2+). Mn(2+) is required as a cofactor.

It catalyses the reaction L-seryl-[protein] + ATP = 3-O-(5'-adenylyl)-L-seryl-[protein] + diphosphate. The catalysed reaction is L-threonyl-[protein] + ATP = 3-O-(5'-adenylyl)-L-threonyl-[protein] + diphosphate. The enzyme catalyses L-tyrosyl-[protein] + ATP = O-(5'-adenylyl)-L-tyrosyl-[protein] + diphosphate. It carries out the reaction L-histidyl-[protein] + UTP = N(tele)-(5'-uridylyl)-L-histidyl-[protein] + diphosphate. It catalyses the reaction L-seryl-[protein] + UTP = O-(5'-uridylyl)-L-seryl-[protein] + diphosphate. The catalysed reaction is L-tyrosyl-[protein] + UTP = O-(5'-uridylyl)-L-tyrosyl-[protein] + diphosphate. Its function is as follows. Nucleotidyltransferase involved in the post-translational modification of proteins. It can catalyze the addition of adenosine monophosphate (AMP) or uridine monophosphate (UMP) to a protein, resulting in modifications known as AMPylation and UMPylation. The protein is Protein nucleotidyltransferase YdiU of Burkholderia ambifaria (strain ATCC BAA-244 / DSM 16087 / CCUG 44356 / LMG 19182 / AMMD) (Burkholderia cepacia (strain AMMD)).